We begin with the raw amino-acid sequence, 333 residues long: MINVGIIGAGGWGLALANIFSEKHNVKVWVHSESSYKLLSTSYRNDNYLENIQLNKSIKFTTDVGEAVNDSEIVIIVTPSFAFADACINIEPYISNDQILVSATKGLDRKTGKTMSEVARSIISGDLSILTLSGPSHAEEAAKGVPTAVVVGGEKGVSEYVRDTLTVPPKFRIYNSTDQKGVEIGGALKNIIAIAGGIVDGLKLGDNTKAALITRGLHEIVRFALSKGARIDTMYGLSGIGDLIVTCSSGLSRNNRLGRELAKGKKYQDVIAENHGQVAEGVYATTAAYEYAQKNNIYMPITEAIYNILFNDANIQDTLTELMSKDAKSEGFF.

Trp12, His31, and Lys105 together coordinate NADPH. The sn-glycerol 3-phosphate site is built by Lys105, Gly134, and Ser136. Residue Ala138 participates in NADPH binding. Sn-glycerol 3-phosphate is bound by residues Lys189, Asp242, Ser252, Arg253, and Asn254. Lys189 (proton acceptor) is an active-site residue. Arg253 contacts NADPH. Positions 278 and 280 each coordinate NADPH.

Belongs to the NAD-dependent glycerol-3-phosphate dehydrogenase family.

The protein localises to the cytoplasm. The enzyme catalyses sn-glycerol 3-phosphate + NAD(+) = dihydroxyacetone phosphate + NADH + H(+). The catalysed reaction is sn-glycerol 3-phosphate + NADP(+) = dihydroxyacetone phosphate + NADPH + H(+). The protein operates within membrane lipid metabolism; glycerophospholipid metabolism. In terms of biological role, catalyzes the reduction of the glycolytic intermediate dihydroxyacetone phosphate (DHAP) to sn-glycerol 3-phosphate (G3P), the key precursor for phospholipid synthesis. The sequence is that of Glycerol-3-phosphate dehydrogenase [NAD(P)+] from Brachyspira hyodysenteriae (strain ATCC 49526 / WA1).